A 1335-amino-acid polypeptide reads, in one-letter code: Aldehyde oxidase 2 (1335 aa).

In terms of domain architecture, 2Fe-2S ferredoxin-type spans 8 to 95 (DVLVFFVNGR…GAAVTTVEGV (88 aa)). 4 residues coordinate [2Fe-2S] cluster: cysteine 47, cysteine 52, cysteine 55, and cysteine 77. Glutamine 116 is a binding site for Mo-molybdopterin. Residues cysteine 117, cysteine 120, cysteine 152, and cysteine 154 each coordinate [2Fe-2S] cluster. Cysteine 154 provides a ligand contact to Mo-molybdopterin. The FAD-binding PCMH-type domain maps to 242-427 (FRGDRVTWVS…ESVHIPHSQK (186 aa)). Residues 270–277 (LVLGNTAL), alanine 351, serine 360, histidine 364, aspartate 373, and leucine 417 contribute to the FAD site. Residues 821-822 (GF), 1103-1106 (ASVG), glutamine 1218, and leucine 1285 contribute to the Mo-molybdopterin site. The Proton acceptor; for azaheterocycle hydroxylase activity role is filled by glutamate 1287.

This sequence belongs to the xanthine dehydrogenase family. Homodimer. [2Fe-2S] cluster is required as a cofactor. FAD serves as cofactor. The cofactor is Mo-molybdopterin. As to expression, detected in kidney, Harderian gland and olfactory mucosa.

Its subcellular location is the cytoplasm. The catalysed reaction is an aldehyde + O2 + H2O = a carboxylate + H2O2 + H(+). Oxidase with broad substrate specificity, oxidizing aromatic azaheterocycles, such as phthalazine, as well as aldehydes, such as benzaldehyde and retinal. In Cavia porcellus (Guinea pig), this protein is Aldehyde oxidase 2 (AOX2).